We begin with the raw amino-acid sequence, 230 residues long: Acyl-protein thioesterase 1 (230 aa).

Active-site charge relay system residues include Ser119, Asp174, and His208. N6-acetyllysine is present on Lys224.

It belongs to the AB hydrolase superfamily. AB hydrolase 2 family. Homodimer. In terms of tissue distribution, platelets.

It is found in the cytoplasm. Its subcellular location is the cell membrane. The protein resides in the nucleus membrane. The protein localises to the endoplasmic reticulum. It carries out the reaction S-hexadecanoyl-L-cysteinyl-[protein] + H2O = L-cysteinyl-[protein] + hexadecanoate + H(+). The catalysed reaction is 1-hexadecanoyl-sn-glycero-3-phosphocholine + H2O = sn-glycerol 3-phosphocholine + hexadecanoate + H(+). The enzyme catalyses a 1-(9Z-octadecenoyl)-2-acyl-sn-glycero-3-phosphocholine + H2O = a 2-acyl-sn-glycero-3-phosphocholine + (9Z)-octadecenoate + H(+). With respect to regulation, inhibited by palmostatin-B, leading to impair depalmitoylating of Ras. Functionally, acts as an acyl-protein thioesterase. Hydrolyzes fatty acids from S-acylated cysteine residues in proteins such as trimeric G alpha proteins or HRAS. Acts as a palmitoyl thioesterase that catalyzes depalmitoylation of proteins, such as ADRB2, KCNMA1 and SQSTM1. Acts as a negative regulator of autophagy by mediating palmitoylation of SQSTM1, decreasing affinity between SQSTM1 and ATG8 proteins and recruitment of ubiquitinated cargo proteins to autophagosomes. Acts as a lysophospholipase and hydrolyzes lysophosphatidylcholine (lyso-PC). Also hydrolyzes lysophosphatidylethanolamine (lyso-PE), lysophosphatidylinositol (lyso-PI) and lysophosphatidylserine (lyso-PS). Has much higher thioesterase activity than lysophospholipase activity. Contributes to the production of lysophosphatidic acid (LPA) during blood coagulation by recognizing and cleaving plasma phospholipids to generate lysophospholipids which in turn act as substrates for ENPP2 to produce LPA. This is Acyl-protein thioesterase 1 (LYPLA1) from Homo sapiens (Human).